The primary structure comprises 490 residues: Aspartyl/glutamyl-tRNA(Asn/Gln) amidotransferase subunit B (490 aa).

It belongs to the GatB/GatE family. GatB subfamily. In terms of assembly, heterotrimer of A, B and C subunits.

The enzyme catalyses L-glutamyl-tRNA(Gln) + L-glutamine + ATP + H2O = L-glutaminyl-tRNA(Gln) + L-glutamate + ADP + phosphate + H(+). The catalysed reaction is L-aspartyl-tRNA(Asn) + L-glutamine + ATP + H2O = L-asparaginyl-tRNA(Asn) + L-glutamate + ADP + phosphate + 2 H(+). Allows the formation of correctly charged Asn-tRNA(Asn) or Gln-tRNA(Gln) through the transamidation of misacylated Asp-tRNA(Asn) or Glu-tRNA(Gln) in organisms which lack either or both of asparaginyl-tRNA or glutaminyl-tRNA synthetases. The reaction takes place in the presence of glutamine and ATP through an activated phospho-Asp-tRNA(Asn) or phospho-Glu-tRNA(Gln). The polypeptide is Aspartyl/glutamyl-tRNA(Asn/Gln) amidotransferase subunit B (Burkholderia thailandensis (strain ATCC 700388 / DSM 13276 / CCUG 48851 / CIP 106301 / E264)).